Here is a 686-residue protein sequence, read N- to C-terminus: Endonuclease GajA (686 aa).

The segment at 1–423 (MYLKSLKIYN…NYVTTKNNYT (423 aa)) is ATPase domain. 52–56 (NCGKT) is a binding site for ATP. The tract at residues 463–599 (FFSDAIIFVE…TSFEEAFILT (137 aa)) is toprim domain. 4 residues coordinate a divalent metal cation: Glu-472, Glu-476, Asp-559, and Glu-604.

In terms of assembly, homotetramer. Forms the core of the anti-phage defense complex. Interacts with GajB; 2 GajB dimers dock at opposite sides of the GajA complex to form a 4:4 GajA-GajB assembly (GajAB). GajAB interacts with Bacillus phage Phi3T Gad1 protein; this interaction forms a 4:4:8 GajAB-Gad1 complex and leads to GajAB inhibition. Mg(2+) serves as cofactor.

Functionally, component of antiviral defense system Gabija type II, composed of GajA and GajB. Probably a nicking endonuclease that is strongly inhibited by physiological levels of nucleotides (NTP and dNTP). Expression of Gabija type II in B.subtilis (strain BEST7003) confers resistance to phages phi105, and SpBeta. During viral replication, when nucleotides are rapidly consumed, it is de-suppressed and degrades target DNA. In Bacillus cereus (strain HuB5-5), this protein is Endonuclease GajA.